The sequence spans 609 residues: NADH-ubiquinone oxidoreductase chain 5 (609 aa).

16 helical membrane passes run 3–23 (VINL…LPIV), 46–66 (AFMI…EMII), 90–110 (MIFV…SMWY), 115–135 (PFIN…MILV), 140–160 (LFQL…LIGW), 174–194 (AVLY…WFLI), 216–236 (LMGL…HPWL), 244–264 (TPVS…FLLI), 276–296 (MQTT…ICAL), 304–323 (IIAF…IGIN), 328–350 (AFLH…GSII), 368–388 (VLPF…GMPF), 410–432 (WALL…IMFF), 460–480 (LLLG…PTST), 485–505 (MPYY…ILAL), and 585–605 (GLIK…LMMI).

This sequence belongs to the complex I subunit 5 family.

It localises to the mitochondrion inner membrane. The enzyme catalyses a ubiquinone + NADH + 5 H(+)(in) = a ubiquinol + NAD(+) + 4 H(+)(out). Core subunit of the mitochondrial membrane respiratory chain NADH dehydrogenase (Complex I) that is believed to belong to the minimal assembly required for catalysis. Complex I functions in the transfer of electrons from NADH to the respiratory chain. The immediate electron acceptor for the enzyme is believed to be ubiquinone. The protein is NADH-ubiquinone oxidoreductase chain 5 (MT-ND5) of Phoca vitulina (Harbor seal).